The following is a 91-amino-acid chain: UPF0250 protein Psyr_4360 (91 aa).

This sequence belongs to the UPF0250 family.

The protein is UPF0250 protein Psyr_4360 of Pseudomonas syringae pv. syringae (strain B728a).